We begin with the raw amino-acid sequence, 334 residues long: RNA polymerase sigma factor RpoS (334 aa).

The tract at residues 21 to 50 (PGIMLDESSADEQPSPRATPKATTSFSSKQ) is disordered. The tract at residues 61–94 (DATQLYLNEIGFSPLLTPEEEVHFARLAQKGDPA) is sigma-70 factor domain-1. Positions 99-169 (MIESNLRLVV…ERAIMNQTRT (71 aa)) are sigma-70 factor domain-2. The short motif at 123–126 (DLIE) is the Interaction with polymerase core subunit RpoC element. Residues 179–254 (ELNVYLRAAR…DDRPTDPCEL (76 aa)) form a sigma-70 factor domain-3 region. The sigma-70 factor domain-4 stretch occupies residues 267–320 (WLTELTDKQREVVIRRFGLRGHESSTLEEVGQEIGLTRERVRQIQVEALKRLRE). Residues 293 to 312 (LEEVGQEIGLTRERVRQIQV) constitute a DNA-binding region (H-T-H motif).

This sequence belongs to the sigma-70 factor family. RpoS subfamily. In terms of assembly, interacts with the RNA polymerase core enzyme.

It localises to the cytoplasm. Its function is as follows. Sigma factors are initiation factors that promote the attachment of RNA polymerase to specific initiation sites and are then released. This sigma factor is the master transcriptional regulator of the stationary phase and the general stress response. In Pseudomonas aeruginosa (strain ATCC 15692 / DSM 22644 / CIP 104116 / JCM 14847 / LMG 12228 / 1C / PRS 101 / PAO1), this protein is RNA polymerase sigma factor RpoS.